A 112-amino-acid polypeptide reads, in one-letter code: Evasin P1095 (112 aa).

An N-terminal signal peptide occupies residues 1–23 (MELNAFTILQIAVFIAVGYHANT). Disulfide bonds link Cys-48–Cys-66, Cys-52–Cys-68, and Cys-62–Cys-79. The N-linked (GlcNAc...) asparagine glycan is linked to Asn-51. Residues 89-112 (GDPNDDPKINEATPQTQIFEKKRK) are disordered.

The protein resides in the secreted. Salivary chemokine-binding protein which binds to host chemokine CXCL8. The polypeptide is Evasin P1095 (Ixodes ricinus (Common tick)).